Consider the following 32-residue polypeptide: Trypsin inhibitor 4 (32 aa).

Cystine bridges form between Cys6–Cys23, Cys13–Cys25, and Cys19–Cys31.

It belongs to the protease inhibitor I7 (squash-type serine protease inhibitor) family.

The protein resides in the secreted. Its function is as follows. Inhibits trypsin. This chain is Trypsin inhibitor 4, found in Cucurbita maxima (Pumpkin).